A 187-amino-acid chain; its full sequence is uncharacterized protein (187 aa).

One can recognise a Tyr recombinase domain in the interval arginine 53–glycine 187. Residues arginine 98 and lysine 123 contribute to the active site.

It belongs to the 'phage' integrase family.

This is an uncharacterized protein from Sinorhizobium fredii (strain NBRC 101917 / NGR234).